A 72-amino-acid chain; its full sequence is Small, acid-soluble spore protein C (72 aa).

The protein belongs to the alpha/beta-type SASP family.

Functionally, SASP are bound to spore DNA. They are double-stranded DNA-binding proteins that cause DNA to change to an a-like conformation. They protect the DNA backbone from chemical and enzymatic cleavage and are thus involved in dormant spore's high resistance to UV light. The protein is Small, acid-soluble spore protein C (sasP-C) of Priestia megaterium (Bacillus megaterium).